The chain runs to 508 residues: Maturase K (508 aa).

It belongs to the intron maturase 2 family. MatK subfamily.

The protein localises to the plastid. It is found in the chloroplast. In terms of biological role, usually encoded in the trnK tRNA gene intron. Probably assists in splicing its own and other chloroplast group II introns. This Collinsia heterophylla (Purple Chinese houses) protein is Maturase K.